The sequence spans 340 residues: Zinc finger protein 488 (340 aa).

The segment at 72–187 (AELALLVAPG…SVFPAGESAD (116 aa)) is important for transcriptional repression activity. The interval 77–180 (LVAPGKPRPG…AERPELTSVF (104 aa)) is disordered. A compositionally biased stretch (pro residues) spans 82–91 (KPRPGKPLPP). The segment covering 106 to 125 (PRMKDRQVDAQAQEREHDDP) has biased composition (basic and acidic residues). C2H2-type zinc fingers lie at residues 275–302 (NWCAKCNLSFRLTSDLVFHMRSHHKKEH) and 317–339 (LACPVCQEHFRERHHLSRHMTSH). The Nuclear localization signal signature appears at 298 to 305 (HKKEHAGP).

This sequence belongs to the krueppel C2H2-type zinc-finger protein family. As to quaternary structure, interacts with OLIG2.

The protein localises to the nucleus. Functionally, transcriptional repressor. Plays a role in oligodendrocyte differentiation, together with OLIG2. Mediates Notch signaling-activated formation of oligodendrocyte precursors. Promotes differentiation of adult neural stem progenitor cells (NSPCs) into mature oligodendrocytes and contributes to remyelination following nerve injury. The sequence is that of Zinc finger protein 488 (ZNF488) from Homo sapiens (Human).